An 80-amino-acid polypeptide reads, in one-letter code: Cell division protein ZapB (80 aa).

Residues 3–80 (FEVLEQLESK…ALLGKMDEVE (78 aa)) adopt a coiled-coil conformation. Positions 41–53 (ANELRSQREELEQ) are enriched in basic and acidic residues. The tract at residues 41–60 (ANELRSQREELEQKSQQAQQ) is disordered.

The protein belongs to the ZapB family. Homodimer. The ends of the coiled-coil dimer bind to each other, forming polymers. Interacts with FtsZ.

It is found in the cytoplasm. In terms of biological role, non-essential, abundant cell division factor that is required for proper Z-ring formation. It is recruited early to the divisome by direct interaction with FtsZ, stimulating Z-ring assembly and thereby promoting cell division earlier in the cell cycle. Its recruitment to the Z-ring requires functional FtsA or ZipA. This chain is Cell division protein ZapB, found in Vibrio campbellii (strain ATCC BAA-1116).